Consider the following 283-residue polypeptide: ATP synthase gamma chain (283 aa).

Belongs to the ATPase gamma chain family. In terms of assembly, F-type ATPases have 2 components, CF(1) - the catalytic core - and CF(0) - the membrane proton channel. CF(1) has five subunits: alpha(3), beta(3), gamma(1), delta(1), epsilon(1). CF(0) has three main subunits: a, b and c.

Its subcellular location is the cell membrane. Produces ATP from ADP in the presence of a proton gradient across the membrane. The gamma chain is believed to be important in regulating ATPase activity and the flow of protons through the CF(0) complex. The sequence is that of ATP synthase gamma chain from Clostridium perfringens (strain ATCC 13124 / DSM 756 / JCM 1290 / NCIMB 6125 / NCTC 8237 / Type A).